The primary structure comprises 377 residues: Alanine racemase (377 aa).

Lys-37 acts as the Proton acceptor; specific for D-alanine in catalysis. At Lys-37 the chain carries N6-(pyridoxal phosphate)lysine. A substrate-binding site is contributed by Arg-135. Tyr-271 functions as the Proton acceptor; specific for L-alanine in the catalytic mechanism. Met-319 serves as a coordination point for substrate.

This sequence belongs to the alanine racemase family. Requires pyridoxal 5'-phosphate as cofactor.

It carries out the reaction L-alanine = D-alanine. It participates in amino-acid biosynthesis; D-alanine biosynthesis; D-alanine from L-alanine: step 1/1. In terms of biological role, catalyzes the interconversion of L-alanine and D-alanine. May also act on other amino acids. The protein is Alanine racemase (alr) of Helicobacter pylori (strain Shi470).